The chain runs to 503 residues: Lycopene beta cyclase, chloroplastic/chromoplastic (503 aa).

The transit peptide at 1–85 (MDTLLRTHNR…DLPLYDPSKA (85 aa)) directs the protein to the chloroplast and chromoplast. 90-117 (LAVVGGGPLARSCSTSLGGGLSVVSIDP) is an NAD(+) binding site.

The protein belongs to the lycopene cyclase family.

The protein resides in the plastid. It localises to the chloroplast. The protein localises to the chromoplast. It is found in the chromoplast membrane. Its subcellular location is the chloroplast membrane. It catalyses the reaction a carotenoid psi-end group = a carotenoid beta-end derivative. It participates in carotenoid biosynthesis; beta-carotene biosynthesis. Its pathway is carotenoid biosynthesis; beta-zeacarotene biosynthesis. Functionally, catalyzes the double cyclization reaction which converts lycopene to beta-carotene and neurosporene to beta-zeacarotene. In Narcissus pseudonarcissus (Daffodil), this protein is Lycopene beta cyclase, chloroplastic/chromoplastic (LCY1).